The sequence spans 664 residues: Lysophospholipase 1 (664 aa).

A signal peptide spans 1–22 (MKLQSLLVSAAVLTSLTENVNA). Residues Asn-26, Asn-33, Asn-52, Asn-78, Asn-92, Asn-123, Asn-160, Asn-170, Asn-215, Asn-277, Asn-307, Asn-345, Asn-388, Asn-459, Asn-489, Asn-513, Asn-541, Asn-565, and Asn-582 are each glycosylated (N-linked (GlcNAc...) asparagine). Positions 35-586 (TCDDDINLVR…TNYCWNGTID (552 aa)) constitute a PLA2c domain. Residue Asn-634 is the site of GPI-anchor amidated asparagine attachment. Positions 635 to 664 (AGNALVNYSNLNTNTFIGVLSVISAVFGLI) are cleaved as a propeptide — removed in mature form.

It belongs to the lysophospholipase family.

Its subcellular location is the cell membrane. It catalyses the reaction a 1-acyl-sn-glycero-3-phosphocholine + H2O = sn-glycerol 3-phosphocholine + a fatty acid + H(+). The catalysed reaction is a 1-acyl-sn-glycero-3-phospho-(1D-myo-inositol) + H2O = sn-glycero-3-phospho-1D-myo-inositol + a fatty acid + H(+). The enzyme catalyses a 1-acyl-sn-glycero-3-phospho-L-serine + H2O = sn-glycero-3-phospho-L-serine + a fatty acid + H(+). It carries out the reaction a 1,2-diacyl-sn-glycero-3-phospho-(1D-myo-inositol) + 2 H2O = sn-glycero-3-phospho-1D-myo-inositol + 2 a carboxylate + 2 H(+). It catalyses the reaction a 1,2-diacyl-sn-glycero-3-phospho-L-serine + 2 H2O = sn-glycero-3-phospho-L-serine + 2 a carboxylate + 2 H(+). The catalysed reaction is 2 1-hexadecanoyl-sn-glycero-3-phosphocholine = 1,2-dihexadecanoyl-sn-glycero-3-phosphocholine + sn-glycerol 3-phosphocholine. The enzyme catalyses 1-hexadecanoyl-sn-glycero-3-phosphocholine + H2O = sn-glycerol 3-phosphocholine + hexadecanoate + H(+). It carries out the reaction 1,2-dihexadecanoyl-sn-glycero-3-phosphocholine + H2O = 1-hexadecanoyl-sn-glycero-3-phosphocholine + hexadecanoate + H(+). Functionally, sequentially removes both fatty acyl groups from diacylglycerophospholipids and therefore has both phospholipase B and lysophospholipase activities. It also displays transacylase activity. Substrate preference is phosphatidylserine &gt; phosphatidylinositol &gt;&gt; phosphatidylcholine &gt; phosphatidylethanolamine. The substrate specificity is pH- and ion-dependent. In contrast with activities observed at optimum pH 3.5, the order of substrate preference at pH 5.5 is phosphatidylcholine = phosphatidylethanolamine &gt;&gt; phosphatidylinositol. Degrades predominantly phosphatidylcholine and to some extent phosphatidylinositol in vivo. The polypeptide is Lysophospholipase 1 (Saccharomyces cerevisiae (strain ATCC 204508 / S288c) (Baker's yeast)).